We begin with the raw amino-acid sequence, 78 residues long: Surfactant-associated protein 2 (78 aa).

A signal peptide spans 1–19 (MGSGLPLVLLLTLLGSSHG). Residue N37 is glycosylated (N-linked (GlcNAc...) asparagine).

In terms of processing, N-glycosylated. In terms of tissue distribution, predominantly expressed in lung, where it is detected in type II pneumocytes in the alveolus, and in nonciliated epithelium in bronchioli (at protein level). Also detected at lower levels in cervix, esophagus, stomach, testis and kidney.

It is found in the secreted. It localises to the cytoplasmic vesicle. The protein localises to the secretory vesicle. The protein resides in the golgi apparatus. Its function is as follows. Putative surfactant protein. This is Surfactant-associated protein 2 (SFTA2) from Homo sapiens (Human).